We begin with the raw amino-acid sequence, 416 residues long: Signal recognition particle receptor FtsY (416 aa).

Over residues 1–10 the composition is skewed to basic residues; that stretch reads MFSFFRRKKK. Residues 1–24 form a disordered region; it reads MFSFFRRKKKQETPALEEAQVQET. GTP contacts are provided by residues 224 to 231, 304 to 308, and 368 to 371; these read GINGAGKT, DTAGR, and TKLD.

Belongs to the GTP-binding SRP family. FtsY subfamily. As to quaternary structure, part of the signal recognition particle protein translocation system, which is composed of SRP and FtsY. SRP is a ribonucleoprotein composed of Ffh and a 4.5S RNA molecule. Mg(2+) is required as a cofactor.

The protein localises to the cell membrane. It is found in the cytoplasm. The enzyme catalyses GTP + H2O = GDP + phosphate + H(+). In terms of biological role, involved in targeting and insertion of nascent membrane proteins into the cytoplasmic membrane. Acts as a receptor for the complex formed by the signal recognition particle (SRP) and the ribosome-nascent chain (RNC). Interaction with SRP-RNC leads to the transfer of the RNC complex to the Sec translocase for insertion into the membrane, the hydrolysis of GTP by both Ffh and FtsY, and the dissociation of the SRP-FtsY complex into the individual components. This Neisseria gonorrhoeae protein is Signal recognition particle receptor FtsY.